Reading from the N-terminus, the 144-residue chain is D-aminoacyl-tRNA deacylase (144 aa).

The Gly-cisPro motif, important for rejection of L-amino acids motif lies at 136–137 (GP).

The protein belongs to the DTD family. Homodimer.

It localises to the cytoplasm. The enzyme catalyses glycyl-tRNA(Ala) + H2O = tRNA(Ala) + glycine + H(+). It catalyses the reaction a D-aminoacyl-tRNA + H2O = a tRNA + a D-alpha-amino acid + H(+). An aminoacyl-tRNA editing enzyme that deacylates mischarged D-aminoacyl-tRNAs. Also deacylates mischarged glycyl-tRNA(Ala), protecting cells against glycine mischarging by AlaRS. Acts via tRNA-based rather than protein-based catalysis; rejects L-amino acids rather than detecting D-amino acids in the active site. By recycling D-aminoacyl-tRNA to D-amino acids and free tRNA molecules, this enzyme counteracts the toxicity associated with the formation of D-aminoacyl-tRNA entities in vivo and helps enforce protein L-homochirality. This Vibrio cholerae serotype O1 (strain ATCC 39541 / Classical Ogawa 395 / O395) protein is D-aminoacyl-tRNA deacylase.